The chain runs to 610 residues: Glutamine--fructose-6-phosphate aminotransferase [isomerizing] (610 aa).

Cys-2 serves as the catalytic Nucleophile; for GATase activity. Positions 2-218 constitute a Glutamine amidotransferase type-2 domain; it reads CGIVGAVAQR…EGDVAEMTRR (217 aa). 2 SIS domains span residues 286-426 and 459-600; these read AAEI…QQQR and LAED…VDQP. Lys-605 functions as the For Fru-6P isomerization activity in the catalytic mechanism.

In terms of assembly, homodimer.

It is found in the cytoplasm. It catalyses the reaction D-fructose 6-phosphate + L-glutamine = D-glucosamine 6-phosphate + L-glutamate. In terms of biological role, catalyzes the first step in hexosamine metabolism, converting fructose-6P into glucosamine-6P using glutamine as a nitrogen source. The sequence is that of Glutamine--fructose-6-phosphate aminotransferase [isomerizing] from Vibrio cholerae serotype O1 (strain ATCC 39315 / El Tor Inaba N16961).